The chain runs to 509 residues: Probable glycine dehydrogenase (decarboxylating) subunit 2 (509 aa).

An N6-(pyridoxal phosphate)lysine modification is found at lysine 278.

The protein belongs to the GcvP family. C-terminal subunit subfamily. In terms of assembly, the glycine cleavage system is composed of four proteins: P, T, L and H. In this organism, the P 'protein' is a heterodimer of two subunits. It depends on pyridoxal 5'-phosphate as a cofactor.

The catalysed reaction is N(6)-[(R)-lipoyl]-L-lysyl-[glycine-cleavage complex H protein] + glycine + H(+) = N(6)-[(R)-S(8)-aminomethyldihydrolipoyl]-L-lysyl-[glycine-cleavage complex H protein] + CO2. Functionally, the glycine cleavage system catalyzes the degradation of glycine. The P protein binds the alpha-amino group of glycine through its pyridoxal phosphate cofactor; CO(2) is released and the remaining methylamine moiety is then transferred to the lipoamide cofactor of the H protein. The sequence is that of Probable glycine dehydrogenase (decarboxylating) subunit 2 from Saccharolobus islandicus (strain Y.N.15.51 / Yellowstone #2) (Sulfolobus islandicus).